We begin with the raw amino-acid sequence, 158 residues long: Large ribosomal subunit protein mL50 (158 aa).

The protein belongs to the mitochondrion-specific ribosomal protein mL50 family. As to quaternary structure, component of the mitochondrial large ribosomal subunit (mt-LSU). Mature mammalian 55S mitochondrial ribosomes consist of a small (28S) and a large (39S) subunit. The 28S small subunit contains a 12S ribosomal RNA (12S mt-rRNA) and 30 different proteins. The 39S large subunit contains a 16S rRNA (16S mt-rRNA), a copy of mitochondrial valine transfer RNA (mt-tRNA(Val)), which plays an integral structural role, and 52 different proteins.

It is found in the mitochondrion. In Homo sapiens (Human), this protein is Large ribosomal subunit protein mL50 (MRPL50).